A 344-amino-acid polypeptide reads, in one-letter code: HTH-type transcriptional regulator XC_2801 (344 aa).

Residues 3–60 (HDLNDTLIFVKVVEQGSFIAAANSLGLPKTTVSRKVQELETRLGARLLHRTTRRIGLT) enclose the HTH lysR-type domain. The segment at residues 20–39 (FIAAANSLGLPKTTVSRKVQ) is a DNA-binding region (H-T-H motif).

The protein belongs to the LysR transcriptional regulatory family. In terms of assembly, interacts with the cyclic di-GMP effector XC_3703.

Its activity is regulated as follows. Activity is regulated by cyclic di-GMP. Cyclic di-GMP specifically binds to XC_3703, which inhibits the interaction of the XC_2801-XC_3703 complex with DNA and prevents the transcription of the target genes. In terms of biological role, transcriptional regulator that directly or indirectly regulates the expression of virulence-related genes, including flhB, aaeA, fliL and flgG. Binds to the promoter of the target genes only in the presence of XC_3703. The protein is HTH-type transcriptional regulator XC_2801 of Xanthomonas campestris pv. campestris (strain 8004).